The primary structure comprises 506 residues: Histidine--tRNA ligase (506 aa).

The protein belongs to the class-II aminoacyl-tRNA synthetase family. As to quaternary structure, homodimer.

It localises to the cytoplasm. It catalyses the reaction tRNA(His) + L-histidine + ATP = L-histidyl-tRNA(His) + AMP + diphosphate + H(+). This Bradyrhizobium diazoefficiens (strain JCM 10833 / BCRC 13528 / IAM 13628 / NBRC 14792 / USDA 110) protein is Histidine--tRNA ligase (hisS).